We begin with the raw amino-acid sequence, 100 residues long: MSPTLSTGNRDQRGSSRSYAFVSLASHHFTPQGKITITSSLTRKIDPGNFQGQDVVDFSPWVVLPDEDKVAFLISCRVTAKIRKSGLPQLFKTNTSRDIG.

Its subcellular location is the mitochondrion. This is an uncharacterized protein from Arabidopsis thaliana (Mouse-ear cress).